A 429-amino-acid polypeptide reads, in one-letter code: Probable imidazolonepropionase (429 aa).

4-imidazolone-5-propanoate-binding residues include Tyr-161 and His-194. Residue Tyr-161 participates in N-formimidoyl-L-glutamate binding. Fe(3+) is bound at residue His-262. His-262 is a binding site for Zn(2+). Glu-265 is a 4-imidazolone-5-propanoate binding site. Asp-336 serves as a coordination point for Fe(3+). Zn(2+) is bound at residue Asp-336. An N-formimidoyl-L-glutamate-binding site is contributed by Asn-338.

It belongs to the metallo-dependent hydrolases superfamily. HutI family. Requires Zn(2+) as cofactor. It depends on Fe(3+) as a cofactor.

It catalyses the reaction 4-imidazolone-5-propanoate + H2O = N-formimidoyl-L-glutamate. The protein operates within amino-acid degradation; L-histidine degradation into L-glutamate; N-formimidoyl-L-glutamate from L-histidine: step 3/3. The chain is Probable imidazolonepropionase (amdhd1) from Nematostella vectensis (Starlet sea anemone).